The primary structure comprises 400 residues: MQTILVLTTFLSAWFLAVGFDVFWNVPSQQCKKYGMKFVPLLEQYSILVNKEDNFKGDKITIFYESQLGLYPHIGANDESFNGGIPQLGDLKAHLEKSAVDIRRDILDKSATGLRIIDWEAWRPIWEFNWSSLRKYQDKMKKVVRQFNPTAHESTVAKLAHNEWENSSKSWMLSTLQLGKQLRPNSVWCYYLFPDCYNYDGNSVQEFQCSEAIRKGNDRLKWLWEESTAVCPSIYIKEGQLTNYTLQKRIWFTNGRLQEALRVAQPKARIYPYINYSIKPGMMVPEVEFWRLIAQIASLGMDGAVIWGSSASVGSKNHCAQLMKYIADVLGPATLRIKENVARCSKQACSGRGRCTWPKDTSVIAWKFLVEKEDYDFYLGDIECKCVEGYEGRYCEQKTK.

The signal sequence occupies residues 1–19; it reads MQTILVLTTFLSAWFLAVG. Intrachain disulfides connect C31/C319, C196/C209, C344/C355, C349/C384, and C386/C395. Residue E120 is the Proton donor of the active site. N-linked (GlcNAc...) asparagine glycosylation is found at N129 and N166. 2 N-linked (GlcNAc...) asparagine glycosylation sites follow: N243 and N275. The EGF-like domain maps to 340–396; the sequence is NVARCSKQACSGRGRCTWPKDTSVIAWKFLVEKEDYDFYLGDIECKCVEGYEGRYCE.

Belongs to the glycosyl hydrolase 56 family. As to quaternary structure, monomer. In terms of tissue distribution, expressed by the venom gland.

The protein resides in the secreted. It catalyses the reaction Random hydrolysis of (1-&gt;4)-linkages between N-acetyl-beta-D-glucosamine and D-glucuronate residues in hyaluronate.. Its function is as follows. Spider venom endo-hyaluronidase that is able to degrade purified hyaluronic acid (HA) and chondroitin sulfate (CS). Has no activity on dermatan sulfate (DS) and heparan sulfate (HS). Also increases the dermonecrotic effect of the dermonecrotic toxin (AC P0CE80), when injected in rabbit skin, supporting the hypothesis that venom hyaluronidases are spreading factors. This Loxosceles intermedia (Brown spider) protein is Hyaluronidase.